The sequence spans 77 residues: Protein IDA (77 aa).

The N-terminal stretch at 1–26 (MAPCRTMMVLLCFVLFLAASSSCVAA) is a signal peptide. The segment at 56–69 (GVPIPPSAPSKRHN) is RLK5-binding.

As to quaternary structure, interaction with RLK5. Expressed specifically in the floral abscission zone.

The protein resides in the secreted. It is found in the extracellular space. Involved in an ethylene-independent separation step of floral abscission. Promotes abscission zone (AZ) cells rounding. May act with RLK5 and HSL2 as ligand-receptor pairs. The chain is Protein IDA from Arabidopsis thaliana (Mouse-ear cress).